Consider the following 471-residue polypeptide: Monocarboxylate transporter 4 (471 aa).

The Cytoplasmic segment spans residues 1 to 17 (MGGAVVDEGPTGIKAPD). The chain crosses the membrane as a helical span at residues 18–38 (GGWGWAVLFGCFIITGFSYAF). At 39–61 (PKAVSVFFKELMHEFGIGYSDTA) the chain is on the extracellular side. The helical transmembrane segment at 62–82 (WISSILLAMLYGTGPLCSMCV) threads the bilayer. Over 83-84 (NR) the chain is Cytoplasmic. Residues 85 to 105 (FGCRPVMLVGGLFASLGMVAA) traverse the membrane as a helical segment. The Extracellular portion of the chain corresponds to 106–109 (SFCR). Residues 110–130 (SIIQIYLTTGVITGLGLALNF) form a helical membrane-spanning segment. Residues 131 to 149 (QPSLIMLNRYFNKRRPMAN) are Cytoplasmic-facing. A helical membrane pass occupies residues 150–170 (GLAAAGSPVFLCALSPLGQLL). Residues 171 to 179 (QDHYGWRGG) lie on the Extracellular side of the membrane. Residues 180 to 200 (FLILGGLLLNCCVCAALMRPL) traverse the membrane as a helical segment. The Cytoplasmic segment spans residues 201 to 231 (VAPQASGGAEPHGPQRPSPRLLDLSVFRDRG). The chain crosses the membrane as a helical span at residues 232–252 (FLIYAVAASIMVLGLFVPPVF). The Extracellular segment spans residues 253 to 267 (VVSYAKDMGVPDTKA). A helical membrane pass occupies residues 268–288 (AFLLTILGFIDIFARPTAGFI). Residues 289 to 298 (TGLKKVRPYS) lie on the Cytoplasmic side of the membrane. Residues 299–319 (VYLFSFAMFFNGFTDLTGSTA) traverse the membrane as a helical segment. Residues 320-321 (SD) lie on the Extracellular side of the membrane. A helical membrane pass occupies residues 322–342 (YGGLVVFCIFFGISYGMVGAL). Residues 343-355 (QFEVLMAIVGTQK) are Cytoplasmic-facing. Residues 356-376 (FSSAIGLVLLLEAVAVLIGPP) form a helical membrane-spanning segment. Residues 377–391 (SGGKLLDATKVYKYV) lie on the Extracellular side of the membrane. A helical membrane pass occupies residues 392–412 (FILAGAEVLTSSLVLLLGNFF). Residues 413-471 (CIGKRKRPEVTKPEEVASEEEKLHKPPVDVRVDSREVEHFLKAEPEKNGEVVHTPETSV) are Cytoplasmic-facing. Basolateral sorting signal stretches follow at residues 429-447 (ASEE…VDSR) and 447-471 (REVE…ETSV). S430 is modified (phosphoserine). T466 carries the post-translational modification Phosphothreonine. The residue at position 470 (S470) is a Phosphoserine.

The protein belongs to the major facilitator superfamily. Monocarboxylate porter (TC 2.A.1.13) family. As to quaternary structure, interacts with BSG; interaction mediates SLC16A3 targeting to the plasma membrane. Detected in testis, small intestine, parotid gland, lung and brain. Small amounts are detected in heart, kidney and spleen. Expressed in skeletal muscle.

The protein localises to the cell membrane. The protein resides in the basolateral cell membrane. The catalysed reaction is (S)-lactate(in) + H(+)(in) = (S)-lactate(out) + H(+)(out). It carries out the reaction pyruvate(out) + H(+)(out) = pyruvate(in) + H(+)(in). Proton-dependent transporter of monocarboxylates such as L-lactate and pyruvate. Plays a predominant role in the L-lactate efflux from highly glycolytic cells. In Rattus norvegicus (Rat), this protein is Monocarboxylate transporter 4 (Slc16a3).